A 365-amino-acid polypeptide reads, in one-letter code: MVPEMSERQVFQASELTYLLENCSSSYDYAENESDSCCASPPCPQDISLNFDRAFLPALYGLLFLLGLLGNGAVAAVLCSQRAARTSTDTFLLHLAVADMLLVLTLPLWRVDTAVQWVFGSGLCKVAGALFNINFYAGALLLACISFDRYLSIVHATQPYRRGPPARVTLTCVVVWGLCLFFAIPDFIFLSANRDERLNAMHCRYNFPQVGRTALRGLQLVAGFLLPLLVMAYCYARILAVLLVSRGQRRQRRMRLVVVVVVAFALCWTPYHLVVLVDTLMDLGALDRNCGRESRVDVAKSVTSGLGYMHCCLNPLLYAFVGVKFRERMWMLLLRLGCPDHRGHQRHPTLSRRESSWSETPSTPR.

At 1–57 (MVPEMSERQVFQASELTYLLENCSSSYDYAENESDSCCASPPCPQDISLNFDRAFLP) the chain is on the extracellular side. Residue N22 is glycosylated (N-linked (GlcNAc...) asparagine). Sulfotyrosine is present on residues Y27 and Y29. An N-linked (GlcNAc...) asparagine glycan is attached at N32. A helical transmembrane segment spans residues 58–78 (ALYGLLFLLGLLGNGAVAAVL). The Cytoplasmic segment spans residues 79-88 (CSQRAARTST). A helical membrane pass occupies residues 89–109 (DTFLLHLAVADMLLVLTLPLW). The Extracellular portion of the chain corresponds to 110–126 (RVDTAVQWVFGSGLCKV). A disulfide bond links C124 and C203. Residues 127-147 (AGALFNINFYAGALLLACISF) form a helical membrane-spanning segment. The Cytoplasmic portion of the chain corresponds to 148–169 (DRYLSIVHATQPYRRGPPARVT). A helical membrane pass occupies residues 170–190 (LTCVVVWGLCLFFAIPDFIFL). The Extracellular segment spans residues 191–223 (SANRDERLNAMHCRYNFPQVGRTALRGLQLVAG). The chain crosses the membrane as a helical span at residues 224-244 (FLLPLLVMAYCYARILAVLLV). The Cytoplasmic portion of the chain corresponds to 245 to 256 (SRGQRRQRRMRL). The chain crosses the membrane as a helical span at residues 257 to 277 (VVVVVVAFALCWTPYHLVVLV). At 278 to 301 (DTLMDLGALDRNCGRESRVDVAKS) the chain is on the extracellular side. Residues 302–322 (VTSGLGYMHCCLNPLLYAFVG) form a helical membrane-spanning segment. At 323 to 365 (VKFRERMWMLLLRLGCPDHRGHQRHPTLSRRESSWSETPSTPR) the chain is on the cytoplasmic side. Residues 342-365 (RGHQRHPTLSRRESSWSETPSTPR) are disordered.

This sequence belongs to the G-protein coupled receptor 1 family. In terms of assembly, homomer. Forms heteromers with ACKR4. Interacts with PF4/CXCL4. Sulfation on Tyr-27 and Tyr-29 is essential for CXCL10 binding. In terms of processing, N-glycosylated.

Its subcellular location is the cell membrane. Its function is as follows. Receptor for the C-X-C chemokine CXCL9, CXCL10 and CXCL11 and mediates the proliferation, survival and angiogenic activity of mesangial cells through a heterotrimeric G-protein signaling pathway. Probably promotes cell chemotaxis response. Binds to CCL21. Upon activation by PF4, induces activated T-lymphocytes migration mediated via downstream Ras/extracellular signal-regulated kinase (ERK) signaling. This is C-X-C chemokine receptor type 3 (CXCR3) from Canis lupus familiaris (Dog).